The primary structure comprises 356 residues: UDP-N-acetylglucosamine--N-acetylmuramyl-(pentapeptide) pyrophosphoryl-undecaprenol N-acetylglucosamine transferase (356 aa).

UDP-N-acetyl-alpha-D-glucosamine contacts are provided by residues Ser12–Gly14, Asn120, Arg163, Ser187, and Gln286.

It belongs to the glycosyltransferase 28 family. MurG subfamily.

The protein resides in the cell inner membrane. It catalyses the reaction di-trans,octa-cis-undecaprenyl diphospho-N-acetyl-alpha-D-muramoyl-L-alanyl-D-glutamyl-meso-2,6-diaminopimeloyl-D-alanyl-D-alanine + UDP-N-acetyl-alpha-D-glucosamine = di-trans,octa-cis-undecaprenyl diphospho-[N-acetyl-alpha-D-glucosaminyl-(1-&gt;4)]-N-acetyl-alpha-D-muramoyl-L-alanyl-D-glutamyl-meso-2,6-diaminopimeloyl-D-alanyl-D-alanine + UDP + H(+). It functions in the pathway cell wall biogenesis; peptidoglycan biosynthesis. Functionally, cell wall formation. Catalyzes the transfer of a GlcNAc subunit on undecaprenyl-pyrophosphoryl-MurNAc-pentapeptide (lipid intermediate I) to form undecaprenyl-pyrophosphoryl-MurNAc-(pentapeptide)GlcNAc (lipid intermediate II). This is UDP-N-acetylglucosamine--N-acetylmuramyl-(pentapeptide) pyrophosphoryl-undecaprenol N-acetylglucosamine transferase from Pelagibacter ubique (strain HTCC1062).